The sequence spans 617 residues: Na(+)/H(+) antiporter NhaA 1 (617 aa).

A na(+)/H(+) antiporter NhaA region spans residues 1–433 (MTVTEQTTAR…GWAIFRITDW (433 aa)). 11 helical membrane-spanning segments follow: residues 33-53 (AAALLLTFTVIAILWANSPWA), 75-95 (MTVKHLVNDALMTFFFFIVGL), 113-133 (AVPVVAAAAGLIVPAIVFLAF), 141-161 (HAWGVVISTDTAFLVGALAII), 171-191 (LFLLTLAVVDDVGALVAIAVF), 194-214 (DAIQVGPLVVAVAVLVALALV), 234-254 (VALYLAGIHPTLAGVAVALLI), 304-324 (VGPAVSFVILPLFALVNAGVL), 340-360 (WGVVAGLVIGKFVGITGATWL), 378-398 (IAGGAALSGIGFTISLFIVDI), and 411-431 (IGVLAASVLAFVFGWAIFRIT). The Thioredoxin domain occupies 434-617 (LSPPEPVGLK…LIRALEAGRR (184 aa)).

The protein in the N-terminal section; belongs to the NhaA Na(+)/H(+) (TC 2.A.33) antiporter family.

It is found in the cell membrane. The catalysed reaction is Na(+)(in) + 2 H(+)(out) = Na(+)(out) + 2 H(+)(in). Functionally, na(+)/H(+) antiporter that extrudes sodium in exchange for external protons. The chain is Na(+)/H(+) antiporter NhaA 1 from Mycolicibacterium vanbaalenii (strain DSM 7251 / JCM 13017 / BCRC 16820 / KCTC 9966 / NRRL B-24157 / PYR-1) (Mycobacterium vanbaalenii).